The sequence spans 175 residues: Protein LpfE (175 aa).

The first 20 residues, 1 to 20, serve as a signal peptide directing secretion; that stretch reads MKNLHALMPACLLLTASAMA.

The protein belongs to the fimbrial protein family.

Its subcellular location is the fimbrium. The polypeptide is Protein LpfE (lpfE) (Salmonella typhimurium (strain LT2 / SGSC1412 / ATCC 700720)).